The sequence spans 118 residues: Small ribosomal subunit protein bTHXc (118 aa).

The transit peptide at 1-55 (MASLILGAPPRVTVALPSSRLSSSHSETAGVSLSCFTHQFSLSTSSSSSIPLVYC) directs the protein to the chloroplast. Positions 61–118 (KTAKGKRFNHSFGNARPRNKSKGRGPERVPVPPAPPRKDKFENDEKIKIDIDESLFSN) are disordered. Basic and acidic residues predominate over residues 96–111 (PRKDKFENDEKIKIDI). At Ser-117 the chain carries Phosphoserine.

The protein belongs to the bacterial ribosomal protein bTHX family. In terms of assembly, part of the 30S ribosomal subunit.

Its subcellular location is the plastid. It localises to the chloroplast. The sequence is that of Small ribosomal subunit protein bTHXc (RPS31) from Arabidopsis thaliana (Mouse-ear cress).